We begin with the raw amino-acid sequence, 261 residues long: Triosephosphate isomerase (261 aa).

A substrate-binding site is contributed by 10 to 12 (NWK). His100 acts as the Electrophile in catalysis. Catalysis depends on Glu172, which acts as the Proton acceptor. Residues Gly178, Ser218, and 239–240 (GG) contribute to the substrate site.

Belongs to the triosephosphate isomerase family. Homodimer.

The protein resides in the cytoplasm. It carries out the reaction D-glyceraldehyde 3-phosphate = dihydroxyacetone phosphate. It functions in the pathway carbohydrate biosynthesis; gluconeogenesis. Its pathway is carbohydrate degradation; glycolysis; D-glyceraldehyde 3-phosphate from glycerone phosphate: step 1/1. Involved in the gluconeogenesis. Catalyzes stereospecifically the conversion of dihydroxyacetone phosphate (DHAP) to D-glyceraldehyde-3-phosphate (G3P). The polypeptide is Triosephosphate isomerase (Mycobacterium marinum (strain ATCC BAA-535 / M)).